Reading from the N-terminus, the 247-residue chain is ATP synthase subunit a, chloroplastic (247 aa).

A run of 5 helical transmembrane segments spans residues Gln38 to Val58, Val95 to Leu115, Ile134 to Thr154, Leu199 to Leu219, and Gly220 to Gly240.

This sequence belongs to the ATPase A chain family. As to quaternary structure, F-type ATPases have 2 components, CF(1) - the catalytic core - and CF(0) - the membrane proton channel. CF(1) has five subunits: alpha(3), beta(3), gamma(1), delta(1), epsilon(1). CF(0) has four main subunits: a, b, b' and c.

The protein resides in the plastid. It is found in the chloroplast thylakoid membrane. Functionally, key component of the proton channel; it plays a direct role in the translocation of protons across the membrane. The polypeptide is ATP synthase subunit a, chloroplastic (atpI) (Spinacia oleracea (Spinach)).